The primary structure comprises 201 residues: Transgelin (201 aa).

A2 carries the post-translational modification N-acetylalanine. Residues 24–137 form the Calponin-homology (CH) domain; sequence EELEERLVEW…RTVMALGSLA (114 aa). The could be involved in actin-binding stretch occupies residues 154–161; the sequence is KKAQEHKR. S166 carries the phosphoserine modification. Residue K172 is modified to N6-acetyllysine. The Calponin-like repeat unit spans residues 175-200; sequence IGLQMGSNRGASQAGMTGYGRPRQII. Phosphoserine is present on S181. R183 carries the omega-N-methylarginine modification.

It belongs to the calponin family. In terms of tissue distribution, smooth muscle and mesenchymal cells but not in skeletal muscle or lymphocytes.

It is found in the cytoplasm. Functionally, actin cross-linking/gelling protein. The polypeptide is Transgelin (Tagln) (Rattus norvegicus (Rat)).